The following is a 109-amino-acid chain: Nucleoid-associated protein BCB4264_A0025 (109 aa).

The protein belongs to the YbaB/EbfC family. In terms of assembly, homodimer.

It is found in the cytoplasm. The protein localises to the nucleoid. Its function is as follows. Binds to DNA and alters its conformation. May be involved in regulation of gene expression, nucleoid organization and DNA protection. This Bacillus cereus (strain B4264) protein is Nucleoid-associated protein BCB4264_A0025.